The following is a 100-amino-acid chain: Large ribosomal subunit protein uL23 (100 aa).

This sequence belongs to the universal ribosomal protein uL23 family. Part of the 50S ribosomal subunit. Contacts protein L29, and trigger factor when it is bound to the ribosome.

One of the early assembly proteins it binds 23S rRNA. One of the proteins that surrounds the polypeptide exit tunnel on the outside of the ribosome. Forms the main docking site for trigger factor binding to the ribosome. This Thermotoga neapolitana (strain ATCC 49049 / DSM 4359 / NBRC 107923 / NS-E) protein is Large ribosomal subunit protein uL23.